A 158-amino-acid chain; its full sequence is NADPH-dependent 7-cyano-7-deazaguanine reductase (158 aa).

The span at 1–13 shows a compositional bias: polar residues; the sequence is MAKRSNTTMTSAG. Positions 1–37 are disordered; it reads MAKRSNTTMTSAGLQLGREVAPPDSPETAKLDRVPNP. Residues 27–37 show a composition bias toward basic and acidic residues; it reads ETAKLDRVPNP. The active-site Thioimide intermediate is Cys-56. Asp-63 acts as the Proton donor in catalysis. Substrate contacts are provided by residues 78 to 80 and 97 to 98; these read VES and HE.

It belongs to the GTP cyclohydrolase I family. QueF type 1 subfamily.

It localises to the cytoplasm. It carries out the reaction 7-aminomethyl-7-carbaguanine + 2 NADP(+) = 7-cyano-7-deazaguanine + 2 NADPH + 3 H(+). The protein operates within tRNA modification; tRNA-queuosine biosynthesis. Catalyzes the NADPH-dependent reduction of 7-cyano-7-deazaguanine (preQ0) to 7-aminomethyl-7-deazaguanine (preQ1). The chain is NADPH-dependent 7-cyano-7-deazaguanine reductase from Bradyrhizobium sp. (strain ORS 278).